The chain runs to 284 residues: NAD kinase (284 aa).

Catalysis depends on aspartate 60, which acts as the Proton acceptor. Residues 60–61, 134–135, arginine 145, lysine 162, aspartate 164, 175–180, and glutamine 234 each bind NAD(+); these read DG, NE, and TAYSFS.

Belongs to the NAD kinase family. A divalent metal cation is required as a cofactor.

It is found in the cytoplasm. It catalyses the reaction NAD(+) + ATP = ADP + NADP(+) + H(+). In terms of biological role, involved in the regulation of the intracellular balance of NAD and NADP, and is a key enzyme in the biosynthesis of NADP. Catalyzes specifically the phosphorylation on 2'-hydroxyl of the adenosine moiety of NAD to yield NADP. This chain is NAD kinase, found in Clostridium botulinum (strain Alaska E43 / Type E3).